Reading from the N-terminus, the 1349-residue chain is Serine-aspartate repeat-containing protein D (1349 aa).

An N-terminal signal peptide occupies residues 1–35; the sequence is MLNRENKTAITRKGMVSNRLNKFSIRKYTVGTASI. Positions 23 to 34 match the YSIRK-G/S signaling motif motif; sequence FSIRKYTVGTAS. The segment at 36 to 568 is ligand binding A region; that stretch reads LVGTTLIFGL…NNQSGGAGQE (533 aa). A disordered region spans residues 54 to 185; it reads ESTNKELNEA…NKKVDAKTES (132 aa). 2 stretches are compositionally biased toward polar residues: residues 62 to 71 and 94 to 108; these read EATTSASDNQ and EMVSSQGNETTSNGN. Over residues 130-145 the composition is skewed to basic and acidic residues; that stretch reads KSDEQASPKSTNEDLN. Polar residues-rich tracts occupy residues 146–155 and 163–173; these read TKQTISNQEA and NKSVVNVQPTN. Basic and acidic residues predominate over residues 174–183; the sequence is EENKKVDAKT. CNA-B domains follow at residues 569-680, 681-791, 792-901, 902-1012, and 1013-1123; these read VYKI…IYKP, KYNL…YKTP, KYNL…FYKP, TYNL…YKTP, and KYSL…EEDT. 3 disordered regions span residues 856–883, 972–992, and 1081–1325; these read FETPSGYTPTQVGSGTDEGIDSNGTSTT, YTPTSVTSGNDTEKDSNGLTT, and AGLT…SNNA. 2 stretches are compositionally biased toward polar residues: residues 860–869 and 972–981; these read SGYTPTQVGS and YTPTSVTSGN. Acidic residues-rich tracts occupy residues 1091–1101 and 1118–1288; these read TEDDKDADGGE and YFEE…DSDS. An LPXTG sorting signal motif is present at residues 1312–1316; sequence LPETG. Threonine 1315 carries the post-translational modification Pentaglycyl murein peptidoglycan amidated threonine. Residues 1316-1349 constitute a propeptide, removed by sortase; the sequence is GSENNGSNNATLFGGLFAALGSLLLFGRRKKQNK.

It belongs to the serine-aspartate repeat-containing protein (SDr) family. As to quaternary structure, interacts with host DSG1; this interaction increases S.aureus adherence to keratinocytes.

It is found in the secreted. The protein localises to the cell wall. In terms of biological role, cell surface-associated calcium-binding protein which plays an important role in adhesion and pathogenesis. Mediates interactions with components of the extracellular matrix such as host DSG1 to promote bacterial adhesion to host cells. Contributes to the resistance to killing by innate immune components such as neutrophils present in blood and thus attenuates bacterial clearance. This Staphylococcus aureus (strain NCTC 8325 / PS 47) protein is Serine-aspartate repeat-containing protein D (sdrD).